Reading from the N-terminus, the 61-residue chain is Photosystem II reaction center X protein (61 aa).

A helical transmembrane segment spans residues 26 to 46 (IGSFIAAALLIVIPATAFLIF).

The protein belongs to the PsbX family. Type 2 subfamily. In terms of assembly, PSII consists of a core antenna complex that captures photons, and an electron transfer chain that converts photonic excitation into a charge separation. PSII forms dimeric complexes.

Its subcellular location is the cellular thylakoid membrane. Its function is as follows. Involved in the binding and/or turnover of quinones at the Q(B) site of Photosystem II. The chain is Photosystem II reaction center X protein from Prochlorococcus marinus (strain MIT 9215).